A 344-amino-acid chain; its full sequence is S-adenosylmethionine:tRNA ribosyltransferase-isomerase (344 aa).

This sequence belongs to the QueA family. Monomer.

The protein resides in the cytoplasm. The enzyme catalyses 7-aminomethyl-7-carbaguanosine(34) in tRNA + S-adenosyl-L-methionine = epoxyqueuosine(34) in tRNA + adenine + L-methionine + 2 H(+). Its pathway is tRNA modification; tRNA-queuosine biosynthesis. Its function is as follows. Transfers and isomerizes the ribose moiety from AdoMet to the 7-aminomethyl group of 7-deazaguanine (preQ1-tRNA) to give epoxyqueuosine (oQ-tRNA). This is S-adenosylmethionine:tRNA ribosyltransferase-isomerase from Nitrosococcus oceani (strain ATCC 19707 / BCRC 17464 / JCM 30415 / NCIMB 11848 / C-107).